The chain runs to 448 residues: Death-associated protein kinase 3 (448 aa).

Residues 13 to 275 (YEMGEELGSG…IAQSLEHSWI (263 aa)) enclose the Protein kinase domain. ATP-binding positions include 19–27 (LGSGQFAIV) and lysine 42. Aspartate 139 functions as the Proton acceptor in the catalytic mechanism. Residues 161–204 (DFGIAHRIEAGSEFKNIFGTPEFVAPEIVNYEPLGLEADMWSIG) are activation segment. Phosphothreonine occurs at positions 180 and 225. Position 265 is a phosphothreonine; by autocatalysis (threonine 265). Threonine 265 is subject to Phosphothreonine; by ROCK1. At serine 304 the chain carries Phosphoserine; by DAPK1. A Phosphoserine; by autocatalysis and DAPK1 modification is found at serine 306. 3 positions are modified to phosphoserine; by DAPK1: serine 307, serine 313, and serine 321. The tract at residues 390–448 (AQEEARAALLGAGGLKRRLCRLENRYDALAAQVAAEVQFVRDLVRALEQERLQAECGVR) is interaction with CDC5L. Positions 422-436 (VAAEVQFVRDLVRAL) are leucine-zipper.

Belongs to the protein kinase superfamily. CAMK Ser/Thr protein kinase family. DAP kinase subfamily. As to quaternary structure, homooligomer in its kinase-active form (homotrimers and homodimers are reported); monomeric in its kinase-inactive form. Homodimerization is required for activation segment autophosphorylation. Interacts with DAXX, PAWR, ATF4, NLK, TCF7L2, UBE2D1, UBE2D2, UBE2D3, and CDC5L. Interacts with AR; enhanced by AATF. Interacts with LUZP1; the interaction is likely to occur throughout the cell cycle and reduces the LUZP1-mediated suppression of MYL9 phosphorylation. It depends on Mg(2+) as a cofactor. In terms of processing, ubiquitinated. Ubiquitination mediated by the UBE2D3 E3 ligase does not lead to proteasomal degradation, but influences promyelocytic leukemia protein nuclear bodies (PML-NBs) formation in the nucleus. Post-translationally, the phosphorylation status is critical for kinase activity, oligomerization and intracellular localization. Phosphorylation at Thr-180, Thr-225 and Thr-265 is essential for activity. The phosphorylated form is localized in the cytoplasm and nuclear translocation or retention is maximal when it is not phosphorylated. Phosphorylation increases the trimeric form, and its dephosphorylation favors a kinase-inactive monomeric form. Highly expressed in heart, brain, lung, skeletal muscle, kidney and testis. Lower levels in liver and spleen.

The protein resides in the nucleus. It is found in the PML body. Its subcellular location is the cytoplasm. It localises to the cytoskeleton. The protein localises to the microtubule organizing center. The protein resides in the centrosome. It is found in the chromosome. Its subcellular location is the centromere. It localises to the spindle. The protein localises to the midbody. The enzyme catalyses L-seryl-[protein] + ATP = O-phospho-L-seryl-[protein] + ADP + H(+). The catalysed reaction is L-threonyl-[protein] + ATP = O-phospho-L-threonyl-[protein] + ADP + H(+). With respect to regulation, a sequential activation is proposed: autophosphorylation at consensus sites is leading to dimerization of the catalytic domain and activation segment exchange (producing an active confirmation of both kinase modules in trans) followed by phosphorylation at Thr-180 in the activation segment and at other regulatory sites. Phosphorylation at Thr-180, Thr-225 and Thr-265 is essential for activity. Inhibited by pyridone 6 (K00225), a potent, ATP-competitive inhibitor. Phosphorylation at Thr-180, Thr-225 and Thr-265 is essential for activity. In terms of biological role, serine/threonine kinase which is involved in the regulation of apoptosis, autophagy, transcription, translation and actin cytoskeleton reorganization. Regulates both type I (caspase-dependent) apoptotic and type II (caspase-independent) autophagic cell deaths signal, depending on the cellular setting. Involved in formation of promyelocytic leukemia protein nuclear body (PML-NB). Involved in apoptosis involving PAWR which mediates cytoplasmic relocation; in vitro phosphorylates PAWR. Regulates myosin phosphorylation in both smooth muscle and non-muscle cells. In smooth muscle, regulates myosin either directly by phosphorylating MYL12B and MYL9 or through inhibition of smooth muscle myosin phosphatase (SMPP1M) via phosphorylation of PPP1R12A; the inhibition of SMPP1M functions to enhance muscle responsiveness to Ca(2+) and promote a contractile state. Phosphorylates MYL12B in non-muscle cells leading to reorganization of actin cytoskeleton such as in regulation of cell polarity and cell migration. Positively regulates canonical Wnt/beta-catenin signaling through interaction with NLK and TCF7L2; disrupts the NLK-TCF7L2 complex thereby influencing the phosphorylation of TCF7L2 by NLK. Phosphorylates STAT3 and enhances its transcriptional activity. Enhances transcription from AR-responsive promoters in a hormone- and kinase-dependent manner. Phosphorylates histone H3 on 'Thr-11' at centromeres during mitosis. Phosphorylates RPL13A on 'Ser-77' upon interferon-gamma activation which is causing RPL13A release from the ribosome, RPL13A association with the GAIT complex and its subsequent involvement in transcript-selective translation inhibition. The sequence is that of Death-associated protein kinase 3 (Dapk3) from Mus musculus (Mouse).